Consider the following 383-residue polypeptide: ATP phosphoribosyltransferase regulatory subunit (383 aa).

Belongs to the class-II aminoacyl-tRNA synthetase family. HisZ subfamily. In terms of assembly, heteromultimer composed of HisG and HisZ subunits.

It is found in the cytoplasm. The protein operates within amino-acid biosynthesis; L-histidine biosynthesis; L-histidine from 5-phospho-alpha-D-ribose 1-diphosphate: step 1/9. Functionally, required for the first step of histidine biosynthesis. May allow the feedback regulation of ATP phosphoribosyltransferase activity by histidine. In Neisseria gonorrhoeae (strain NCCP11945), this protein is ATP phosphoribosyltransferase regulatory subunit.